Here is a 533-residue protein sequence, read N- to C-terminus: GMP synthase [glutamine-hydrolyzing] (533 aa).

The region spanning 25-215 is the Glutamine amidotransferase type-1 domain; it reads SIVIFDFGSQ…VFNICKCHAN (191 aa). The active-site Nucleophile is Cys102. Residues His189 and Glu191 contribute to the active site. Residues 216–408 form the GMPS ATP-PPase domain; the sequence is WTMGNYIQES…LGLPDEMIWR (193 aa). Position 243–249 (243–249) interacts with ATP; it reads SGGVDSA.

Homodimer.

It carries out the reaction XMP + L-glutamine + ATP + H2O = GMP + L-glutamate + AMP + diphosphate + 2 H(+). Its pathway is purine metabolism; GMP biosynthesis; GMP from XMP (L-Gln route): step 1/1. Its function is as follows. Catalyzes the synthesis of GMP from XMP. The polypeptide is GMP synthase [glutamine-hydrolyzing] (Dehalococcoides mccartyi (strain ATCC BAA-2266 / KCTC 15142 / 195) (Dehalococcoides ethenogenes (strain 195))).